Here is a 247-residue protein sequence, read N- to C-terminus: ATP synthase subunit a, chloroplastic (247 aa).

5 helical membrane-spanning segments follow: residues 38–58 (QVLITSWVVIAILLGSVTVAV), 95–115 (VPFIGTMFLFIFVSNWSGALL), 134–154 (INTTVALALPTSVAYFYAGLT), 199–219 (LVVVVLVSLVPLVVPIPVMFL), and 220–240 (GLFTSGIQALIFATLAAAYIG).

The protein belongs to the ATPase A chain family. As to quaternary structure, F-type ATPases have 2 components, CF(1) - the catalytic core - and CF(0) - the membrane proton channel. CF(1) has five subunits: alpha(3), beta(3), gamma(1), delta(1), epsilon(1). CF(0) has four main subunits: a, b, b' and c.

The protein localises to the plastid. It localises to the chloroplast thylakoid membrane. Its function is as follows. Key component of the proton channel; it plays a direct role in the translocation of protons across the membrane. The protein is ATP synthase subunit a, chloroplastic of Acorus calamus var. americanus (American sweet flag).